Consider the following 452-residue polypeptide: Protein CLT3, chloroplastic (452 aa).

A chloroplast-targeting transit peptide spans 1-34 (MATTSRRFTTGLFASITSVKSHSANRPQSISLIR). A run of 10 helical transmembrane segments spans residues 105–125 (AEIVIWAAVTAAFGVGNRVMY), 137–157 (FFLAQLSTFGYVAVYYTILYF), 175–195 (PFLIVGILEALAAAAGMAAAA), 202–222 (TTVLSQTFLVWQIFFSIIFLG), 230–250 (ILGCTLVALGVIVSVASGSGA), 258–278 (GVLWILLMVLSFLLQGAGTVL), 307–327 (FQAICIALLLPFLSKLWGIPF), 353–373 (GAPFLPLLFVIMNIGYNIALL), 389–409 (TVSVPIAVFLFTMPLPYLGVA), and 412–432 (LPKGFMGGTIILVLGMILYSW).

This sequence belongs to the CRT-like transporter family.

The protein resides in the plastid. It is found in the chloroplast membrane. Involved in thiol transport from the plastid to the cytosol. Transports probably both glutathione (GSH) and its precursor, gamma-glutamylcysteine (gamma-EC). Exhibits some functional redundancy with CLT1 in maintaining the root GSH pool. This chain is Protein CLT3, chloroplastic, found in Arabidopsis thaliana (Mouse-ear cress).